Consider the following 510-residue polypeptide: MTSTVPAETSLNKFEKLKSEKDGLAVKSELEDFARLGWEAMDETDRDHRLRWMGVFFRPVSQGKFMLRMRIPNGILTSGQIRVLAEVVERYGEDGNADITTRPNLQLRGIRLEDIPDIFRRFEQAGLTSIQSGMDNVRNITGSPVAGIDADELIDTRGLVRKVQDMITNNGEGNPSFSNLPRKFNIAIAGCRDNSVHAEINDIAFVPAYKDGKLGFNVLVGGFFSAKRCEAAVPLNAWVDPRDVVALCEAILIVYRITGCGANRQKSRLMWLIDEWGMDKFRAEVEQQLGHPLQTAAPKDEILWDKRDHIGIHAQKKPGLNYVGLLVPVGRLYAPMFDLARIAEVYGDGEMRLTVERKRDHSRTCPMSSVASLLKEPLLEKFSVSPGLLVRSLVSCTGAQFCNFALIETKNRAMALIRELESELELARPVRIHWTGCPNSCGQPQVADIGLMGTKVRKDGKATEGVDLYMGGKVGKHAELGTCVQKGIPCDDLKPILRNLLIEHFGARPK.

[4Fe-4S] cluster-binding residues include C396, C402, C437, and C441. C441 is a binding site for siroheme.

Belongs to the nitrite and sulfite reductase 4Fe-4S domain family.

It catalyses the reaction 6 oxidized [2Fe-2S]-[ferredoxin] + NH4(+) + 2 H2O = nitrite + 6 reduced [2Fe-2S]-[ferredoxin] + 8 H(+). This chain is Ferredoxin--nitrite reductase (nirA), found in Leptolyngbya laminosa (Phormidium laminosum).